The chain runs to 343 residues: Programmed cell death protein 2 (343 aa).

Residues cysteine 134, cysteine 137, cysteine 145, cysteine 148, cysteine 154, histidine 158, histidine 167, and cysteine 171 each coordinate Zn(2+). The MYND-type; atypical zinc finger occupies 134–171 (CRVCGCLAPMTCSRCKQAHYCSKEHQTLDWRLGHKQAC).

Post-translationally, ubiquitinated by PRKN, promoting proteasomal degradation.

Its subcellular location is the nucleus. Its function is as follows. May be a DNA-binding protein with a regulatory function. May play an important role in cell death and/or in regulation of cell proliferation. This Mus musculus (Mouse) protein is Programmed cell death protein 2 (Pdcd2).